The primary structure comprises 336 residues: Ribosomal RNA small subunit methyltransferase C (336 aa).

The protein belongs to the methyltransferase superfamily. RsmC family. In terms of assembly, monomer.

It localises to the cytoplasm. It catalyses the reaction guanosine(1207) in 16S rRNA + S-adenosyl-L-methionine = N(2)-methylguanosine(1207) in 16S rRNA + S-adenosyl-L-homocysteine + H(+). Its function is as follows. Specifically methylates the guanine in position 1207 of 16S rRNA in the 30S particle. This is Ribosomal RNA small subunit methyltransferase C from Buchnera aphidicola subsp. Schizaphis graminum (strain Sg).